A 634-amino-acid chain; its full sequence is MAKVVGIDLGTTNSCVAVMEGGKPTVIANAEGFRTTPSVVAFAKNQDRLVGQIAKRQAVMNPENTFYSVKRFIGRRPDEVTNELTEVAYKVDTSGNAVKLDSSNAGKQFAPEEISAQVLRKLAEDASKYLGETVTQAVIPVPAYFNDSQRQATKDAGKIAGLEVLRIINEPTAAALAYGLDKKSNERILVFDLGGGTFDVSVLEVGDGVFEVLATSGDTHLGGDDFDKKIVDFLAGEFQKNEGIDLRKDKQALQRLTEAAEKAKIELSSATQTEINLPFITATQDGPKHLDLTLTRAKFEELASDLIDRCRIPVEQAIKDAKLALSEIDEIVLVGGSTRIPAVQAIVKQMTGKEPNQSVNPDEVVAIGAAIQGGVLAGEVKDILLLDVTPLSLGVETLGGVMTKLIPRNTTIPTKKSETFSTAADGQTNVEIHVLQGEREMASDNKSLGTFRLDGIPPAPRGVPQIEVIFVIDANGILNVTAKDKGSGKEQSISITGASTLSDNEVDRMVKDAEANAAADKERRERIDLKNQADTLVYQSEKQLSELGDKISADEKSKVEGFIQELKDALAAEDYDKIRSIIEQLQQALYAAGSSVYQQASAEASANAQAGPSSSSSSSSGDDDVIDAEFSESK.

T197 is modified (phosphothreonine; by autocatalysis). The span at 600 to 620 (ASAEASANAQAGPSSSSSSSS) shows a compositional bias: low complexity. Positions 600 to 634 (ASAEASANAQAGPSSSSSSSSGDDDVIDAEFSESK) are disordered. Positions 621–634 (GDDDVIDAEFSESK) are enriched in acidic residues.

It belongs to the heat shock protein 70 family.

Acts as a chaperone. This chain is Chaperone protein DnaK 2, found in Synechococcus sp. (strain ATCC 27144 / PCC 6301 / SAUG 1402/1) (Anacystis nidulans).